Here is a 181-residue protein sequence, read N- to C-terminus: SecB-like chaperone MT2006 (181 aa).

It belongs to the SecB-like family. Homotetramer, interacts with antitoxin HigA1.

In terms of biological role, chaperone component of an atypical, type II toxin-antitoxin chaperone (TAC) module, probably required for antitoxin HigA1 to neutralize its cognate toxin HigB1. The protein is SecB-like chaperone MT2006 (secBL) of Mycobacterium tuberculosis (strain CDC 1551 / Oshkosh).